Reading from the N-terminus, the 137-residue chain is Large ribosomal subunit protein uL16 (137 aa).

Over residues 1-17 the composition is skewed to basic residues; it reads MLQPKRTKFRKTHKGRN. Residues 1–24 form a disordered region; that stretch reads MLQPKRTKFRKTHKGRNRGLANSG.

It belongs to the universal ribosomal protein uL16 family. Part of the 50S ribosomal subunit.

Binds 23S rRNA and is also seen to make contacts with the A and possibly P site tRNAs. This Aeromonas hydrophila subsp. hydrophila (strain ATCC 7966 / DSM 30187 / BCRC 13018 / CCUG 14551 / JCM 1027 / KCTC 2358 / NCIMB 9240 / NCTC 8049) protein is Large ribosomal subunit protein uL16.